The following is a 421-amino-acid chain: Aspartokinase (421 aa).

7–10 (KYGG) is a binding site for ATP. 25–30 (RIVATK) is a substrate binding site. Ser41 is an ATP binding site. Substrate contacts are provided by residues 45-49 (DTTDD), Glu74, 125-126 (LE), 151-154 (RGGS), and Ser154. ATP is bound by residues 174–175 (TD), 180–185 (FSADPR), and Lys210. 2 ACT domains span residues 267–348 (VTIV…GKVS) and 349–421 (LIGA…GTGR). Residues Asp274, 274–279 (DIPGYA), 292–294 (NID), Gln298, 360–361 (VT), 374–375 (NI), and 381–382 (SE) each bind substrate.

It belongs to the aspartokinase family. As to quaternary structure, heterotetramer consisting of 2 isoforms Alpha (catalytic and regulation) and of a homodimer of 2 isoforms Beta (regulation).

It catalyses the reaction L-aspartate + ATP = 4-phospho-L-aspartate + ADP. Its pathway is amino-acid biosynthesis; L-lysine biosynthesis via DAP pathway; (S)-tetrahydrodipicolinate from L-aspartate: step 1/4. It participates in amino-acid biosynthesis; L-methionine biosynthesis via de novo pathway; L-homoserine from L-aspartate: step 1/3. The protein operates within amino-acid biosynthesis; L-threonine biosynthesis; L-threonine from L-aspartate: step 1/5. Feedback inhibition by lysine and threonine. Functionally, catalyzes the phosphorylation of the beta-carboxyl group of aspartic acid with ATP to yield 4-phospho-L-aspartate, which is involved in the branched biosynthetic pathway leading to the biosynthesis of amino acids lysine, threonine, isoleucine and methionine. This is Aspartokinase (ask) from Mycobacterium bovis (strain ATCC BAA-935 / AF2122/97).